Here is a 478-residue protein sequence, read N- to C-terminus: Glycogen synthase (478 aa).

Lysine 15 is an ADP-alpha-D-glucose binding site.

The protein belongs to the glycosyltransferase 1 family. Bacterial/plant glycogen synthase subfamily.

It carries out the reaction [(1-&gt;4)-alpha-D-glucosyl](n) + ADP-alpha-D-glucose = [(1-&gt;4)-alpha-D-glucosyl](n+1) + ADP + H(+). It functions in the pathway glycan biosynthesis; glycogen biosynthesis. Functionally, synthesizes alpha-1,4-glucan chains using ADP-glucose. This is Glycogen synthase from Clostridium botulinum (strain Alaska E43 / Type E3).